Reading from the N-terminus, the 120-residue chain is Glycine cleavage system H protein (120 aa).

The Lipoyl-binding domain maps to valine 17–lysine 99. Residue lysine 58 is modified to N6-lipoyllysine.

Belongs to the GcvH family. The glycine cleavage system is composed of four proteins: P, T, L and H. The cofactor is (R)-lipoate.

The glycine cleavage system catalyzes the degradation of glycine. The H protein shuttles the methylamine group of glycine from the P protein to the T protein. This chain is Glycine cleavage system H protein, found in Sinorhizobium fredii (strain NBRC 101917 / NGR234).